Here is a 445-residue protein sequence, read N- to C-terminus: Pre-B-cell leukemia transcription factor 2 (445 aa).

Residues 13–44 (VGIPGLPIHGGPQTLTPHPMHEPPTDNGEPRK) are disordered. The span at 31-44 (PMHEPPTDNGEPRK) shows a compositional bias: basic and acidic residues. The PBC domain occupies 42–236 (PRKQDIGDIL…VMILRSRFLD (195 aa)). The PBC-A stretch occupies residues 49–128 (DILQQIMTIT…EGVAGPEKGG (80 aa)). Positions 131-236 (AAAAAAAAAS…VMILRSRFLD (106 aa)) are PBC-B. The segment at residues 237-299 (ARRKRRNFSK…NKRIRYKKNI (63 aa)) is a DNA-binding region (homeobox; TALE-type). Polar residues predominate over residues 319–332 (QGGHSGANSPTTPT). The segment at 319–338 (QGGHSGANSPTTPTSAGSGG) is disordered.

Belongs to the TALE/PBX homeobox family.

The protein localises to the nucleus. Functionally, transcriptional activator that binds the sequence 5'-ATCAATCAA-3'. The polypeptide is Pre-B-cell leukemia transcription factor 2 (pbx2) (Xenopus laevis (African clawed frog)).